A 390-amino-acid chain; its full sequence is MNSLSEANTKFMFDLFQQFRKSKENNIFYSPISITSALGMVLLGAKDNTAQQIKKVLHFDQVTENTTGKAATYHVDRSGNVHHQFQKLLTEFNKSTDAYELKIANKLFGEKTYLFLQEYLDAIKKFYQTSVESVDFANAPEESRKKINSWVESQTNEKIKNLIPEGNIGSNTTLVLVNAIYFKGQWEKKFNKEDTKEEKFWPNKNTYKSIQMMRQYTSFHFASLEDVQAKVLEIPYKGKDLSMIVLLPNEIDGLQKLEEKLTAEKLMEWTSLQNMRETRVDLHLPRFKVEESYDLKDTLRTMGMVDIFNGDADLSGMTGSRGLVLSGVLHKAFVEVTEEGAEAAAATAVVGFGSSPTSTNEEFHCNHPFLFFIRQNKTNSILFYGRFSSP.

Position 1 is an N-acetylmethionine (M1).

Belongs to the serpin family. Ov-serpin subfamily. As to quaternary structure, interacts with MAPK8/JNK1. In terms of tissue distribution, squamous cells. Expressed in some hepatocellular carcinoma (at protein level).

The protein localises to the cytoplasm. May act as a papain-like cysteine protease inhibitor to modulate the host immune response against tumor cells. Also functions as an inhibitor of UV-induced apoptosis via suppression of the activity of c-Jun NH(2)-terminal kinase (JNK1). This is Serpin B3 (SERPINB3) from Homo sapiens (Human).